The sequence spans 400 residues: MSKNRRLFTSESVTEGHPDKICDQISDSILDEILKNDPNARVACETSVTTGLVLVSGEITTSTYVDIPKTVRETIKEIGYTRAKYGFDAETCAVLTSIDEQSADIAMGVDQALEAREGTMSDAEIEAIGAGDQGLMFGYACNETKELMPLPISLAHKLARRLSEVRKEDILPYLRPDGKTQVTVEYDENNKPVRIDAIVISTQHHPEITLEQIQRNLKEHVINPVVPEELIDEETKYFINPTGRFVIGGPQGDAGLTGRKIIVDTYGGYARHGGGAFSGKDATKVDRSAAYAARYVAKNIVAAGLADSCEVQLAYAIGVAQPVSISINTFDTGKASEEKLIEVVRNNFDLRPAGIIKMLDLRRPIYKQTAAYGHFGRHDVDLPWERTDKADALRKEALGE.

H17 is a binding site for ATP. D19 contacts Mg(2+). Position 45 (E45) interacts with K(+). L-methionine contacts are provided by E58 and Q101. The segment at 101-111 (QSADIAMGVDQ) is flexible loop. ATP-binding positions include 177–179 (DGK), 244–245 (RF), D253, 259–260 (RK), A276, and K280. L-methionine is bound at residue D253. K284 serves as a coordination point for L-methionine.

This sequence belongs to the AdoMet synthase family. Homotetramer; dimer of dimers. Mg(2+) serves as cofactor. The cofactor is K(+).

The protein localises to the cytoplasm. The catalysed reaction is L-methionine + ATP + H2O = S-adenosyl-L-methionine + phosphate + diphosphate. Its pathway is amino-acid biosynthesis; S-adenosyl-L-methionine biosynthesis; S-adenosyl-L-methionine from L-methionine: step 1/1. Functionally, catalyzes the formation of S-adenosylmethionine (AdoMet) from methionine and ATP. The overall synthetic reaction is composed of two sequential steps, AdoMet formation and the subsequent tripolyphosphate hydrolysis which occurs prior to release of AdoMet from the enzyme. The protein is S-adenosylmethionine synthase of Bacillus velezensis (strain DSM 23117 / BGSC 10A6 / LMG 26770 / FZB42) (Bacillus amyloliquefaciens subsp. plantarum).